The sequence spans 727 residues: Protein TITANIA (727 aa).

A disordered region spans residues 1–136; sequence MFGDSDGSKD…LASLLQPVPA (136 aa). Pro residues predominate over residues 14 to 25; it reads GAPPSTTDPPFP. Basic and acidic residues predominate over residues 67 to 88; that stretch reads DDGKHCVERDFLHLSAPKRGDP. The span at 104-117 shows a compositional bias: low complexity; sequence DSLQLSLSLNSDGP. A PHD-type zinc finger spans residues 406–470; sequence ACTCSVCHKF…QFQCLACNHS (65 aa). A coiled-coil region spans residues 629–697; sequence VKCKEAEAKL…LEELKMLENS (69 aa).

In terms of tissue distribution, widely expressed.

Its subcellular location is the nucleus. Probable transcription factor that functions as a regulator of metal transporter genes responsible for essential metals delivery to shoots and normal plant growth. Required for the maintenance of metal transporter gene expression, such as IRT1, IRT2, ZIP1, ZIP9, NRAMP1 and NRAMP5. This chain is Protein TITANIA, found in Oryza sativa subsp. japonica (Rice).